A 290-amino-acid chain; its full sequence is Taxis protein CheF1 (290 aa).

As to quaternary structure, interacts with chemotaxis (Che) proteins as well as flagella accessory (Fla) proteins.

Involved in taxis signal transduction. Essential for the ability to control the direction of flagellar rotation. May have a role between CheY and the flagellum. This Halobacterium salinarum (strain ATCC 29341 / DSM 671 / R1) protein is Taxis protein CheF1 (cheF1).